We begin with the raw amino-acid sequence, 366 residues long: Pectinesterase A (366 aa).

Residues 1-24 (MLKTISGTLALSLIIAASVHQAQA) form the signal peptide. Substrate-binding residues include Thr109 and Gln153. The active-site Proton donor is Asp178. Cysteines 192 and 212 form a disulfide. Asp199 serves as the catalytic Nucleophile. The substrate site is built by Arg219, Asn226, Tyr230, Arg267, Trp269, and Thr272.

Belongs to the pectinesterase family. In terms of assembly, monomer.

Its subcellular location is the secreted. It catalyses the reaction [(1-&gt;4)-alpha-D-galacturonosyl methyl ester](n) + n H2O = [(1-&gt;4)-alpha-D-galacturonosyl](n) + n methanol + n H(+). It functions in the pathway glycan metabolism; pectin degradation; 2-dehydro-3-deoxy-D-gluconate from pectin: step 1/5. In terms of biological role, catalyzes the first step in maceration and soft-rotting of plant tissue. This is Pectinesterase A from Dickeya dadantii (strain 3937) (Erwinia chrysanthemi (strain 3937)).